Consider the following 2472-residue polypeptide: Highly reducing polyketide synthase xilA (2472 aa).

The Ketosynthase family 3 (KS3) domain maps to 1–417; it reads MPGGVRDLPA…GTNGHCIIDD (417 aa). Active-site for beta-ketoacyl synthase activity residues include C162, H298, and H340. A disordered region spans residues 442–502; it reads NDINGKSGTN…QRKHHHPKTD (61 aa). Low complexity predominate over residues 450-489; it reads TNGANGANRVNGVNGVNGVNGVNGANGHSNASLLSNGSNN. The 336-residue stretch at 597–932 folds into the Malonyl-CoA:ACP transacylase (MAT) domain; that stretch reads FIFTGQGAQW…CTGTLFVHNV (336 aa). An N-terminal hotdog fold region spans residues 991-1129; it reads HDLLGSKVPG…GQIKVEVAKF (139 aa). Residues 991–1294 form the PKS/mFAS DH domain; it reads HDLLGSKVPG…FTSLNNEQES (304 aa). Catalysis depends on H1023, which acts as the Proton acceptor; for dehydratase activity. The C-terminal hotdog fold stretch occupies residues 1141–1294; that stretch reads GRLVDAQTWY…FTSLNNEQES (154 aa). D1207 (proton donor; for dehydratase activity) is an active-site residue. Residues 1289-1505 are methyltransferase (CMeT) domain; it reads NNEQESPSTG…IITVHALRSI (217 aa). Residues 1724 to 2036 form the Enoyl reductase (ER) domain; the sequence is GLLTSLYFKP…KGTHIGKMVI (313 aa). The region spanning 2060-2239 is the Ketoreductase (KR) domain; sequence ASYILVGGLS…ATTVSLGFIK (180 aa). Residues 2391-2469 form the Carrier domain; that stretch reads ETVKLVSDAI…SIARVIVEEA (79 aa). An O-(pantetheine 4'-phosphoryl)serine modification is found at S2428.

Requires pantetheine 4'-phosphate as cofactor.

It functions in the pathway secondary metabolite biosynthesis. Highly reducing polyketide synthase; part of the gene cluster that mediates the biosynthesis of the 6-methyl-2-pyrone derivative xylariolide D. XilA produces the 5-alkyl-6-methyl-2-pyrone backbone called prexylariolide D via sequential condensations of 4 malonyl-CoA units with one acetyl-CoA starter unit. During the biosynthesis, the linear polyketide chain is branched by the addition of an acetyl unit as the origin of the methyl group at the 2-pyrone ring. Prexylariolide D is then hydroxylated at the side chain by xilC to form the final product, xylariolide D. This chain is Highly reducing polyketide synthase xilA, found in Penicillium crustosum (Blue mold fungus).